Reading from the N-terminus, the 134-residue chain is Acyl carrier protein, chloroplastic (134 aa).

Residues Met-1–Cys-51 constitute a chloroplast transit peptide. A Carrier domain is found at Gln-55–Met-130. Residue Ser-90 is modified to O-(pantetheine 4'-phosphoryl)serine.

This sequence belongs to the acyl carrier protein (ACP) family. 4'-phosphopantetheine is transferred from CoA to a specific serine of apo-ACP by acpS. This modification is essential for activity because fatty acids are bound in thioester linkage to the sulfhydryl of the prosthetic group. In terms of tissue distribution, seed.

It is found in the plastid. Its subcellular location is the chloroplast. The protein operates within lipid metabolism; fatty acid biosynthesis. Carrier of the growing fatty acid chain in fatty acid biosynthesis. The protein is Acyl carrier protein, chloroplastic (ACL1.C1) of Brassica napus (Rape).